The following is a 389-amino-acid chain: Nicotinate phosphoribosyltransferase (389 aa).

A Phosphohistidine; by autocatalysis modification is found at histidine 211.

Belongs to the NAPRTase family. Post-translationally, transiently phosphorylated on a His residue during the reaction cycle. Phosphorylation strongly increases the affinity for substrates and increases the rate of nicotinate D-ribonucleotide production. Dephosphorylation regenerates the low-affinity form of the enzyme, leading to product release.

It carries out the reaction nicotinate + 5-phospho-alpha-D-ribose 1-diphosphate + ATP + H2O = nicotinate beta-D-ribonucleotide + ADP + phosphate + diphosphate. Its pathway is cofactor biosynthesis; NAD(+) biosynthesis; nicotinate D-ribonucleotide from nicotinate: step 1/1. Functionally, catalyzes the synthesis of beta-nicotinate D-ribonucleotide from nicotinate and 5-phospho-D-ribose 1-phosphate at the expense of ATP. The protein is Nicotinate phosphoribosyltransferase of Desulforapulum autotrophicum (strain ATCC 43914 / DSM 3382 / VKM B-1955 / HRM2) (Desulfobacterium autotrophicum).